Consider the following 398-residue polypeptide: MENILNDINKRFISLPEEDVRGNKQILESVLRTFVEQMKTQDPLFKALFRRVFYGGSFYDGLKVGKPEEFDLDILLHIPIYAQPVLNESNVPGFVWLKLNNLDGWLRQPEGRVYKDFRKKFLADNDFLDTGKTLRWMESLVQKTLNTLPWVNNATCELTNEFGTFHINWWKGGPAMTLGISHSSGEKIMDVDLVACFVFSGDKWPINGYRSNPFPSTKPEFFIVPKKPQGPVNPQGRYWSLSFQEQERVLIDNKNRLKPAVKLIKKLKEKTHPNIASYYIKTVFLHIIEQKDQSFWNKSLREVFMTTLREYNEFIADQSIPYYWCRKNNLIGHLAPITLNNISNRIGYIIKDIENNPENIAKHLLTKEEYTKYIQGEDVMAEALPALPASQTSSCVII.

ATP-binding positions include Ser57 and 69–71 (EFD). The Mg(2+) site is built by Glu69, Asp71, and Asp192. GTP is bound by residues Asp192 and 240–247 (SLSFQEQE). Residues 244–247 (QEQE), Lys265, and 277–281 (SYYIK) each bind ATP. 3 residues coordinate Mn(2+): Ile288, Glu289, and Asp292.

The protein belongs to the mab-21 family. Requires Mg(2+) as cofactor. Mn(2+) is required as a cofactor.

The enzyme catalyses GTP + ATP = 2',3'-cGAMP + 2 diphosphate. It carries out the reaction GTP + ATP = pppGp(2'-5')A + diphosphate. The catalysed reaction is pppGp(2'-5')A = 2',3'-cGAMP + diphosphate. Its activity is regulated as follows. The enzyme activity is specifically activated by double-stranded RNA (dsRNA). Nucleotidyltransferase that catalyzes the formation of cyclic GMP-AMP (2',3'-cGAMP) from ATP and GTP and plays a key role in innate immunity. Acts as a key sensor of double-stranded RNA (dsRNA), the presence of dsRNA in the cytoplasm being a danger signal that triggers the immune responses. Directly binds dsRNA, activating the nucleotidyltransferase activity, leading to synthesis of 2',3'-cGAMP, a second messenger that binds to and activates Sting, thereby triggering the antiviral immune response via activation of the NF-kappa-B transcription factor Rel (Relish). The chain is Cyclic GMP-AMP synthase-like receptor from Tribolium castaneum (Red flour beetle).